The chain runs to 181 residues: Putative manganese efflux pump MntP (181 aa).

Helical transmembrane passes span 35-55 (IIFG…GSIA), 59-79 (VADW…LLMI), 102-122 (AATG…LAFI), 126-146 (ILIT…LGVM), and 161-181 (ILGG…HLTM).

The protein belongs to the MntP (TC 9.B.29) family.

The protein localises to the cell inner membrane. Functionally, probably functions as a manganese efflux pump. This Nitrosomonas eutropha (strain DSM 101675 / C91 / Nm57) protein is Putative manganese efflux pump MntP.